The following is a 225-amino-acid chain: Uridylate kinase (225 aa).

Residue 9–10 (GS) participates in ATP binding. Gly44 contributes to the UMP binding site. ATP contacts are provided by Gly45 and Arg49. Residues Asp66 and 114–120 (THPGHTT) contribute to the UMP site. Positions 140, 141, 146, and 149 each coordinate ATP.

The protein belongs to the UMP kinase family. As to quaternary structure, homohexamer.

The protein localises to the cytoplasm. The enzyme catalyses UMP + ATP = UDP + ADP. It participates in pyrimidine metabolism; CTP biosynthesis via de novo pathway; UDP from UMP (UMPK route): step 1/1. With respect to regulation, inhibited by UTP. Catalyzes the reversible phosphorylation of UMP to UDP. This Thermococcus onnurineus (strain NA1) protein is Uridylate kinase.